Here is a 424-residue protein sequence, read N- to C-terminus: 3-ketoacyl-CoA thiolase B, peroxisomal (424 aa).

The N-terminal 26 residues, 1 to 26 (MHRLQVVLGHLAGRSESSSALQAAPC), are a transit peptide targeting the peroxisome. Residues 1-26 (MHRLQVVLGHLAGRSESSSALQAAPC) form a PTS2-type peroxisomal targeting signal region. Cys-123 functions as the Acyl-thioester intermediate in the catalytic mechanism. An N6-acetyllysine mark is found at Lys-173 and Lys-234. The CoA site is built by Arg-249, Thr-252, and Ser-276. Cys-408 serves as the catalytic Proton donor/acceptor.

Belongs to the thiolase-like superfamily. Thiolase family. As to quaternary structure, homodimer. Interacts (via PTS2-type peroxisomal targeting signal region) with PEX7; leading to its translocation into peroxisomes.

It is found in the peroxisome. The catalysed reaction is an acyl-CoA + acetyl-CoA = a 3-oxoacyl-CoA + CoA. The enzyme catalyses 2 acetyl-CoA = acetoacetyl-CoA + CoA. It carries out the reaction hexanoyl-CoA + acetyl-CoA = 3-oxooctanoyl-CoA + CoA. It catalyses the reaction tetradecanoyl-CoA + acetyl-CoA = 3-oxohexadecanoyl-CoA + CoA. The catalysed reaction is 3-oxohexadecanedioyl-CoA + CoA = tetradecanedioyl-CoA + acetyl-CoA. The enzyme catalyses 3-oxo-(6Z,9Z,12Z,15Z,18Z,21Z)-tetracosahexaenoyl-CoA + CoA = (4Z,7Z,10Z,13Z,16Z,19Z)-docosahexaenoyl-CoA + acetyl-CoA. It participates in lipid metabolism; peroxisomal fatty acid beta-oxidation. Functionally, responsible for the thiolytic cleavage of straight chain 3-keto fatty acyl-CoAs (3-oxoacyl-CoAs). Plays an important role in fatty acid peroxisomal beta-oxidation. Catalyzes the cleavage of short, medium, long, and very long straight chain 3-oxoacyl-CoAs. Medium chain straight 3-oxoacyl-CoAs are preferred substrates. The chain is 3-ketoacyl-CoA thiolase B, peroxisomal from Rattus norvegicus (Rat).